A 319-amino-acid polypeptide reads, in one-letter code: 7,8-didemethyl-8-hydroxy-5-deazariboflavin synthase (319 aa).

In terms of domain architecture, Radical SAM core spans 6–236 (VTYSPAFTLV…AEITIQIPPN (231 aa)). The [4Fe-4S] cluster site is built by C20, C24, and C27.

It belongs to the radical SAM superfamily. CofG family. As to quaternary structure, consists of two subunits, CofG and CofH. Requires [4Fe-4S] cluster as cofactor.

The catalysed reaction is 5-amino-5-(4-hydroxybenzyl)-6-(D-ribitylimino)-5,6-dihydrouracil + S-adenosyl-L-methionine = 7,8-didemethyl-8-hydroxy-5-deazariboflavin + 5'-deoxyadenosine + L-methionine + NH4(+) + H(+). The protein operates within cofactor biosynthesis; coenzyme F0 biosynthesis. Its function is as follows. Catalyzes the radical-mediated synthesis of 7,8-didemethyl-8-hydroxy-5-deazariboflavin from 5-amino-5-(4-hydroxybenzyl)-6-(D-ribitylimino)-5,6-dihydrouracil. The chain is 7,8-didemethyl-8-hydroxy-5-deazariboflavin synthase from Gloeobacter violaceus (strain ATCC 29082 / PCC 7421).